Consider the following 356-residue polypeptide: CMP-sialic acid transporter 2 (356 aa).

Positions 1–24 are enriched in basic and acidic residues; sequence MEYRRVKDQESYDVVSQKDIESPG. Positions 1 to 44 are disordered; that stretch reads MEYRRVKDQESYDVVSQKDIESPGERSLSSTSATSSLSTAGASK. Residues 1–52 lie on the Cytoplasmic side of the membrane; that stretch reads MEYRRVKDQESYDVVSQKDIESPGERSLSSTSATSSLSTAGASKGKNSWKLK. Low complexity predominate over residues 27-44; it reads SLSSTSATSSLSTAGASK. Residues 53–73 form a helical membrane-spanning segment; that stretch reads SIVTLALTLLTSSQAILIVWS. The Lumenal portion of the chain corresponds to 74–82; that stretch reads KRAGKYEYS. Residues 83 to 103 traverse the membrane as a helical segment; sequence VTTANFSVEALKCLLSLIALY. Over 104–125 the chain is Cytoplasmic; it reads RTWNSQGVTEDNRLSTSFDEVS. A helical membrane pass occupies residues 126–146; sequence VYPIPAILYMVKNLLQYYIFA. At 147 to 149 the chain is on the lumenal side; it reads YVD. Residues 150–172 traverse the membrane as a helical segment; that stretch reads APAYQILKNLNIISTGVLYRIIL. Topologically, residues 173 to 175 are cytoplasmic; the sequence is KKK. Residues 176 to 196 form a helical membrane-spanning segment; that stretch reads LSEIQWAAFILLCAGCTTAQL. Over 197-211 the chain is Lumenal; sequence NPSSDHVLQTPIQGW. The chain crosses the membrane as a helical span at residues 212-232; the sequence is VMAIVMALLSGFAGVYTEAII. Residues 233-239 lie on the Cytoplasmic side of the membrane; it reads KKRPSRN. A helical membrane pass occupies residues 240–260; it reads INVQNFWLYIFGMLFNLVAIC. At 261 to 277 the chain is on the lumenal side; the sequence is VQDFDAVMNKGFFHGYS. The chain crosses the membrane as a helical span at residues 278–298; sequence FITVLMILNHALSGIAVSMVM. The Cytoplasmic segment spans residues 299-314; sequence KYADNIVKVYSTSVAM. A helical membrane pass occupies residues 315–335; the sequence is LLTAVVSVFLFGFHLSLAFFL. Topologically, residues 336–356 are lumenal; that stretch reads GSTVVSVSVYLHSVGKPQPQK.

Belongs to the nucleotide-sugar transporter family. CMP-Sialate:CMP antiporter (TC 2.A.7.12) subfamily. In terms of tissue distribution, expressed in roots, leaves and stalks.

Its subcellular location is the golgi apparatus membrane. Functionally, sugar transporter involved in the transport of CMP-sialic acid from the cytoplasm into the Golgi. May transport important nucleotide sugars such as CMP-Kdo (2-keto-3-deoxy-D-manno-octulosonic acid) in physiological conditions. This Oryza sativa subsp. japonica (Rice) protein is CMP-sialic acid transporter 2.